We begin with the raw amino-acid sequence, 377 residues long: Chaperone protein DnaJ (377 aa).

Positions 6–70 (DYYKILGIDK…EKKAIYDKYG (65 aa)) constitute a J domain. A CR-type zinc finger spans residues 143–225 (GRVISQKLDK…CKGAKKIKES (83 aa)). C156, C159, C173, C176, C199, C202, C213, and C216 together coordinate Zn(2+). 4 CXXCXGXG motif repeats span residues 156–163 (CESCNGTG), 173–180 (CSTCNGRG), 199–206 (CSTCNGLG), and 213–220 (CPSCKGAK).

It belongs to the DnaJ family. As to quaternary structure, homodimer. Requires Zn(2+) as cofactor.

It localises to the cytoplasm. In terms of biological role, participates actively in the response to hyperosmotic and heat shock by preventing the aggregation of stress-denatured proteins and by disaggregating proteins, also in an autonomous, DnaK-independent fashion. Unfolded proteins bind initially to DnaJ; upon interaction with the DnaJ-bound protein, DnaK hydrolyzes its bound ATP, resulting in the formation of a stable complex. GrpE releases ADP from DnaK; ATP binding to DnaK triggers the release of the substrate protein, thus completing the reaction cycle. Several rounds of ATP-dependent interactions between DnaJ, DnaK and GrpE are required for fully efficient folding. Also involved, together with DnaK and GrpE, in the DNA replication of plasmids through activation of initiation proteins. This chain is Chaperone protein DnaJ, found in Mycoplasmopsis pulmonis (strain UAB CTIP) (Mycoplasma pulmonis).